We begin with the raw amino-acid sequence, 572 residues long: Urease subunit alpha (572 aa).

A Urease domain is found at Gly130–Phe572. Residues His135, His137, and Lys218 each contribute to the Ni(2+) site. Lys218 is subject to N6-carboxylysine. Substrate is bound at residue His220. His247 and His273 together coordinate Ni(2+). Catalysis depends on His321, which acts as the Proton donor. Asp361 contributes to the Ni(2+) binding site.

This sequence belongs to the metallo-dependent hydrolases superfamily. Urease alpha subunit family. In terms of assembly, heterotrimer of UreA (gamma), UreB (beta) and UreC (alpha) subunits. Three heterotrimers associate to form the active enzyme. The cofactor is Ni cation. In terms of processing, carboxylation allows a single lysine to coordinate two nickel ions.

It localises to the cytoplasm. It catalyses the reaction urea + 2 H2O + H(+) = hydrogencarbonate + 2 NH4(+). It functions in the pathway nitrogen metabolism; urea degradation; CO(2) and NH(3) from urea (urease route): step 1/1. This is Urease subunit alpha from Ralstonia nicotianae (strain ATCC BAA-1114 / GMI1000) (Ralstonia solanacearum).